Consider the following 400-residue polypeptide: Melanization protease 1 (400 aa).

The signal sequence occupies residues 1 to 22; it reads MEPHFFFTVLWMLLMGTSSTYA. Residues 23-137 constitute a propeptide, activation peptide; sequence QEIFGYCRTP…PNCGENFGDR (115 aa). One can recognise a Clip domain in the interval 28-91; sequence YCRTPDENSG…FCFTNVQICC (64 aa). 3 cysteine pairs are disulfide-bonded: Cys-29–Cys-90, Cys-39–Cys-70, and Cys-45–Cys-91. A disordered region spans residues 98–120; sequence NQQPQWGNHPQPTQTTKPTKRSG. Disulfide bonds link Cys-130–Cys-268, Cys-168–Cys-184, and Cys-210–Cys-220. The Peptidase S1 domain maps to 138–399; it reads VVGGNETTKR…YLNWIENNVR (262 aa). Asn-142 is a glycosylation site (N-linked (GlcNAc...) asparagine). His-183 functions as the Charge relay system in the catalytic mechanism. Positions 201, 203, 206, and 209 each coordinate Ca(2+). Catalysis depends on Asp-248, which acts as the Charge relay system. Asn-296 carries an N-linked (GlcNAc...) asparagine glycan. 2 disulfide bridges follow: Cys-315-Cys-332 and Cys-342-Cys-375. The Charge relay system role is filled by Ser-346.

It belongs to the peptidase S1 family. CLIP subfamily.

Serine protease which plays an essential role in the melanization immune response by acting downstream of sp7 to activate prophenoloxidase (PPO1). May function in diverse Hayan-dependent PPO1-activating cascades that are negatively controlled by different serpin proteins; Spn27A in the hemolymph and Spn77BA in the trachea. Regulation of melanization and PPO1 activation appears to be largely independent of the Toll signaling pathway. The polypeptide is Melanization protease 1 (Drosophila melanogaster (Fruit fly)).